We begin with the raw amino-acid sequence, 801 residues long: Palmitoyl thioesterase CPT1C (801 aa).

At 1-49 (MAEAHQASSLLSSLSSDGAEVELSSSVWQEIYLSALRSWKRNLWRVWND) the chain is on the cytoplasmic side. A helical membrane pass occupies residues 50–70 (FLAGVVPATPLSWLFLFSTIQ). The Mitochondrial intermembrane portion of the chain corresponds to 71 to 103 (LACLLQLDPSLGLMEKIKELLPDWGGQHHQLQG). Residues 104-124 (LLAAAVFASCLWGTLIFTLHV) traverse the membrane as a helical segment. The Cytoplasmic portion of the chain corresponds to 125-801 (ALRLLLSHHG…PNIPKSSTNL (677 aa)). The Proton acceptor role is filled by His-469. 551 to 563 (GKSFIKGCHVSSD) provides a ligand contact to CoA. (R)-carnitine-binding residues include Tyr-585, Ser-587, and Thr-598. The segment at 760-801 (LFQAGQQFKRQFTGLGESSGWKYSNLSCKTVDPNIPKSSTNL) is required for interaction with GRIA1.

Belongs to the carnitine/choline acetyltransferase family. In terms of assembly, peripherally associated with AMPAR complex. AMPAR complex consists of an inner core made of 4 pore-forming GluA/GRIA proteins (GRIA1, GRIA2, GRIA3 and GRIA4) and 4 major auxiliary subunits arranged in a twofold symmetry. One of the two pairs of distinct binding sites is occupied either by CNIH2, CNIH3 or CACNG2, CACNG3. The other harbors CACNG2, CACNG3, CACNG4, CACNG8 or GSG1L. This inner core of AMPAR complex is complemented by outer core constituents binding directly to the GluA/GRIA proteins at sites distinct from the interaction sites of the inner core constituents. Outer core constituents include at least PRRT1, PRRT2, CKAMP44/SHISA9, FRRS1L and NRN1. The proteins of the inner and outer core serve as a platform for other, more peripherally associated AMPAR constituents, including CPT1C. Alone or in combination, these auxiliary subunits control the gating and pharmacology of the AMPAR complex and profoundly impact their biogenesis and protein processing. Interacts with SACM1L; the interaction regulates SACM1L phosphatidylinositol-3-phosphatase activity and translocation to endoplasmic reticulum/trans Golgi network in a malonyl-CoA dependent manner. Interacts with ATL1. In terms of tissue distribution, expressed in brain (at protein level).

It localises to the synapse. The protein localises to the cell projection. The protein resides in the dendrite. It is found in the axon. Its subcellular location is the endoplasmic reticulum membrane. It carries out the reaction S-hexadecanoyl-L-cysteinyl-[protein] + H2O = L-cysteinyl-[protein] + hexadecanoate + H(+). Its function is as follows. Palmitoyl thioesterase specifically expressed in the endoplasmic reticulum of neurons. Modulates the trafficking of the glutamate receptor, AMPAR, to plasma membrane through depalmitoylation of GRIA1. Also regulates AMPR trafficking through the regulation of SACM1L phosphatidylinositol-3-phosphatase activity by interaction in a malonyl-CoA dependent manner. Binds malonyl-CoA and couples malonyl-CoA to ceramide levels, necessary for proper spine maturation and contributing to systemic energy homeostasis and appetite control. Binds to palmitoyl-CoA, but does not have carnitine palmitoyltransferase 1 catalytic activity or at very low levels. The polypeptide is Palmitoyl thioesterase CPT1C (Cpt1c) (Rattus norvegicus (Rat)).